The following is a 291-amino-acid chain: Undecaprenyl-diphosphatase (291 aa).

A run of 8 helical transmembrane segments spans residues 1 to 21, 48 to 68, 102 to 122, 126 to 146, 162 to 182, 203 to 223, 231 to 251, and 267 to 287; these read MFII…LTEF, SAFT…AWVF, LHVL…DDFI, LFSV…MIIA, ISYF…WPGF, SDFT…LSLL, IADI…GLIA, and FAIY…GFGI.

It belongs to the UppP family.

The protein resides in the cell membrane. The catalysed reaction is di-trans,octa-cis-undecaprenyl diphosphate + H2O = di-trans,octa-cis-undecaprenyl phosphate + phosphate + H(+). Catalyzes the dephosphorylation of undecaprenyl diphosphate (UPP). Confers resistance to bacitracin. The protein is Undecaprenyl-diphosphatase of Staphylococcus aureus (strain COL).